The sequence spans 646 residues: Serine/threonine-protein kinase PLK3 (646 aa).

Positions 1 to 35 are disordered; that stretch reads MEPAAGFLSPRPFQRAAAAPAPPAGPGPPPSALRG. The segment covering 10–19 has biased composition (low complexity); that stretch reads PRPFQRAAAA. The segment covering 20-31 has biased composition (pro residues); sequence PAPPAGPGPPPS. In terms of domain architecture, Protein kinase spans 62–314; the sequence is YLKGRLLGKG…IDQILRHDFF (253 aa). Residues 68 to 76 and K91 each bind ATP; that span reads LGKGGFARC. D185 functions as the Proton acceptor in the catalytic mechanism. The interval 381–417 is disordered; that stretch reads GHQDARPEAPAASGPAPVSLVETAPEDSSPRGTLASS. POLO box domains lie at 463-541 and 562-645; these read WVSK…YMEQ and LLLQ…DRSP.

The protein belongs to the protein kinase superfamily. Ser/Thr protein kinase family. CDC5/Polo subfamily. As to quaternary structure, interacts (via the POLO-box domain) with CIB1; leading to inhibit PLK3 kinase activity. Interacts with GOLGB1. In terms of processing, phosphorylated in an ATM-dependent manner following DNA damage. Phosphorylated as cells enter mitosis and dephosphorylated as cells exit mitosis. As to expression, transcripts are highly detected in placenta, lung, followed by skeletal muscle, heart, pancreas, ovaries and kidney and weakly detected in liver and brain. May have a short half-live. In cells of hematopoietic origin, strongly and exclusively detected in terminally differentiated macrophages. Transcript expression appears to be down-regulated in primary lung tumor.

The protein localises to the cytoplasm. It localises to the nucleus. Its subcellular location is the nucleolus. It is found in the golgi apparatus. The protein resides in the cytoskeleton. The protein localises to the microtubule organizing center. It localises to the centrosome. It carries out the reaction L-seryl-[protein] + ATP = O-phospho-L-seryl-[protein] + ADP + H(+). The catalysed reaction is L-threonyl-[protein] + ATP = O-phospho-L-threonyl-[protein] + ADP + H(+). Functionally, serine/threonine-protein kinase involved in cell cycle regulation, response to stress and Golgi disassembly. Polo-like kinases act by binding and phosphorylating proteins that are already phosphorylated on a specific motif recognized by the POLO box domains. Phosphorylates ATF2, BCL2L1, CDC25A, CDC25C, CHEK2, HIF1A, JUN, p53/TP53, p73/TP73, PTEN, TOP2A and VRK1. Involved in cell cycle regulation: required for entry into S phase and cytokinesis. Phosphorylates BCL2L1, leading to regulate the G2 checkpoint and progression to cytokinesis during mitosis. Plays a key role in response to stress: rapidly activated upon stress stimulation, such as ionizing radiation, reactive oxygen species (ROS), hyperosmotic stress, UV irradiation and hypoxia. Involved in DNA damage response and G1/S transition checkpoint by phosphorylating CDC25A, p53/TP53 and p73/TP73. Phosphorylates p53/TP53 in response to reactive oxygen species (ROS), thereby promoting p53/TP53-mediated apoptosis. Phosphorylates CHEK2 in response to DNA damage, promoting the G2/M transition checkpoint. Phosphorylates the transcription factor p73/TP73 in response to DNA damage, leading to inhibit p73/TP73-mediated transcriptional activation and pro-apoptotic functions. Phosphorylates HIF1A and JUN is response to hypoxia. Phosphorylates ATF2 following hyperosmotic stress in corneal epithelium. Also involved in Golgi disassembly during the cell cycle: part of a MEK1/MAP2K1-dependent pathway that induces Golgi fragmentation during mitosis by mediating phosphorylation of VRK1. May participate in endomitotic cell cycle, a form of mitosis in which both karyokinesis and cytokinesis are interrupted and is a hallmark of megakaryocyte differentiation, via its interaction with CIB1. In Homo sapiens (Human), this protein is Serine/threonine-protein kinase PLK3 (PLK3).